The sequence spans 225 residues: N-(5'-phosphoribosyl)anthranilate isomerase (225 aa).

The protein belongs to the TrpF family.

The catalysed reaction is N-(5-phospho-beta-D-ribosyl)anthranilate = 1-(2-carboxyphenylamino)-1-deoxy-D-ribulose 5-phosphate. The protein operates within amino-acid biosynthesis; L-tryptophan biosynthesis; L-tryptophan from chorismate: step 3/5. This Nitrobacter hamburgensis (strain DSM 10229 / NCIMB 13809 / X14) protein is N-(5'-phosphoribosyl)anthranilate isomerase.